The sequence spans 139 residues: Endoribonuclease YbeY (139 aa).

Histidine 105, histidine 109, and aspartate 115 together coordinate Zn(2+).

The protein belongs to the endoribonuclease YbeY family. Zn(2+) serves as cofactor.

It is found in the cytoplasm. Functionally, single strand-specific metallo-endoribonuclease involved in late-stage 70S ribosome quality control and in maturation of the 3' terminus of the 16S rRNA. The chain is Endoribonuclease YbeY from Flavobacterium johnsoniae (strain ATCC 17061 / DSM 2064 / JCM 8514 / BCRC 14874 / CCUG 350202 / NBRC 14942 / NCIMB 11054 / UW101) (Cytophaga johnsonae).